The sequence spans 377 residues: SH2/SH3 adapter protein Nck1 (377 aa).

Ala-2 bears the N-acetylalanine mark. Residues 2–61 (AEEVVVVAKFDYVAQQEQELDIKKNERLWLLDDSKSWWRVRNSMNKTGFVPSNYVERKNS) enclose the SH3 1 domain. Ser-85, Ser-91, and Ser-96 each carry phosphoserine. Tyr-105 carries the post-translational modification Phosphotyrosine. The 60-residue stretch at 106–165 (DLNMPAFVKFNYMAEREDELSLIKGTKVIVMEKCSDGWWRGSYNGQIGWFPSNYVTEEGD) folds into the SH3 2 domain. Ser-166 carries the phosphoserine modification. The region spanning 190-252 (QVLHVVQALY…PKNYVTIMQN (63 aa)) is the SH3 3 domain. The SH2 domain occupies 282-376 (WYYGKVTRHQ…GEKLYLVKHL (95 aa)).

In terms of assembly, interacts (via SH2 domain and SH3 domain 2) with EGFR. Interacts with PAK1 and SOS1. Interacts (via SH3 domains) with PKN2. Associates with BLNK, PLCG1, VAV1 and NCK1 in a B-cell antigen receptor-dependent fashion. Interacts with SOCS7. This interaction is required for nuclear import. Part of a complex containing PPP1R15B, PP1 and NCK1. Interacts with RALGPS1. Interacts with CAV2 (tyrosine phosphorylated form). Interacts with ADAM15. Interacts with FASLG. Directly interacts with RASA1. Interacts with isoform 4 of MINK1. Interacts with FLT1 (tyrosine phosphorylated). Interacts with KDR (tyrosine phosphorylated). Interacts (via SH2 domain) with EPHB1; activates the JUN cascade to regulate cell adhesion. Interacts with EPHA2. Interacts (via SH2 domain) with PDGFRB (tyrosine phosphorylated). Interacts with the inactive form of EIF2AK2/PKR. Interacts with PTPN1. Interacts with INSR/insulin receptor (in response to insulin stimulation); this interaction may mediate PTPN1 recruitment leading to INSR dephosphorylation. Interacts with CD3E (via Proline-rich sequence); the interaction is ligand dependent but independent of tyrosine kinase activation. Interacts with EGFR. Interacts with IRS1. In terms of processing, phosphorylated on Ser and Tyr residues. Phosphorylated in response to activation of EGFR and FcERI. Phosphorylated by activated PDGFRB.

The protein localises to the cytoplasm. It localises to the endoplasmic reticulum. The protein resides in the nucleus. Its function is as follows. Adapter protein which associates with tyrosine-phosphorylated growth factor receptors, such as KDR and PDGFRB, or their cellular substrates. Maintains low levels of EIF2S1 phosphorylation by promoting its dephosphorylation by PP1. Plays a role in the DNA damage response, not in the detection of the damage by ATM/ATR, but for efficient activation of downstream effectors, such as that of CHEK2. Plays a role in ELK1-dependent transcriptional activation in response to activated Ras signaling. Modulates the activation of EIF2AK2/PKR by dsRNA. May play a role in cell adhesion and migration through interaction with ephrin receptors. Also acts as an adpater protein for the T cell receptor complex (TCR-CD3E). Upon ligand engagement, is recruited by CD3E and promotes maturation of the immune synapse and T cell activation. The sequence is that of SH2/SH3 adapter protein Nck1 (Nck1) from Mus musculus (Mouse).